We begin with the raw amino-acid sequence, 84 residues long: MESVITATIIGASLLLAFAALGTAIGFAILGGKFLESSSRQPELASSLQTKMFIVAGLLDAIAMIAVGISLLFIFANPFIDLLK.

2 consecutive transmembrane segments (helical) span residues 9–29 (IIGASLLLAFAALGTAIGFAI) and 54–74 (IVAGLLDAIAMIAVGISLLFI).

The protein belongs to the ATPase C chain family. F-type ATPases have 2 components, F(1) - the catalytic core - and F(0) - the membrane proton channel. F(1) has five subunits: alpha(3), beta(3), gamma(1), delta(1), epsilon(1). F(0) has three main subunits: a(1), b(2) and c(10-14). The alpha and beta chains form an alternating ring which encloses part of the gamma chain. F(1) is attached to F(0) by a central stalk formed by the gamma and epsilon chains, while a peripheral stalk is formed by the delta and b chains.

The protein resides in the cell inner membrane. Functionally, f(1)F(0) ATP synthase produces ATP from ADP in the presence of a proton or sodium gradient. F-type ATPases consist of two structural domains, F(1) containing the extramembraneous catalytic core and F(0) containing the membrane proton channel, linked together by a central stalk and a peripheral stalk. During catalysis, ATP synthesis in the catalytic domain of F(1) is coupled via a rotary mechanism of the central stalk subunits to proton translocation. Key component of the F(0) channel; it plays a direct role in translocation across the membrane. A homomeric c-ring of between 10-14 subunits forms the central stalk rotor element with the F(1) delta and epsilon subunits. The polypeptide is ATP synthase subunit c (Haemophilus ducreyi (strain 35000HP / ATCC 700724)).